We begin with the raw amino-acid sequence, 228 residues long: UPF0173 metal-dependent hydrolase RBAM_026340 (228 aa).

Belongs to the UPF0173 family.

The sequence is that of UPF0173 metal-dependent hydrolase RBAM_026340 from Bacillus velezensis (strain DSM 23117 / BGSC 10A6 / LMG 26770 / FZB42) (Bacillus amyloliquefaciens subsp. plantarum).